The sequence spans 254 residues: Ribonuclease 3 (254 aa).

One can recognise an RNase III domain in the interval 24-154 (LRRLQETLGV…VIGALFLDSG (131 aa)). A Mg(2+)-binding site is contributed by glutamate 67. The active site involves aspartate 71. Mg(2+) is bound by residues aspartate 140 and glutamate 143. Glutamate 143 is an active-site residue. The DRBM domain maps to 181-250 (DYKSTLQVLA…ARLAWEQLSG (70 aa)).

It belongs to the ribonuclease III family. In terms of assembly, homodimer. Mg(2+) is required as a cofactor.

The protein localises to the cytoplasm. It catalyses the reaction Endonucleolytic cleavage to 5'-phosphomonoester.. In terms of biological role, digests double-stranded RNA. Involved in the processing of primary rRNA transcript to yield the immediate precursors to the large and small rRNAs (23S and 16S). Processes some mRNAs, and tRNAs when they are encoded in the rRNA operon. Processes pre-crRNA and tracrRNA of type II CRISPR loci if present in the organism. This chain is Ribonuclease 3, found in Treponema pallidum (strain Nichols).